The following is a 1356-amino-acid chain: DNA-directed RNA polymerase subunit beta (1356 aa).

Belongs to the RNA polymerase beta chain family. In terms of assembly, the RNAP catalytic core consists of 2 alpha, 1 beta, 1 beta' and 1 omega subunit. When a sigma factor is associated with the core the holoenzyme is formed, which can initiate transcription.

The enzyme catalyses RNA(n) + a ribonucleoside 5'-triphosphate = RNA(n+1) + diphosphate. DNA-dependent RNA polymerase catalyzes the transcription of DNA into RNA using the four ribonucleoside triphosphates as substrates. This chain is DNA-directed RNA polymerase subunit beta, found in Phenylobacterium zucineum (strain HLK1).